Reading from the N-terminus, the 973-residue chain is UvrABC system protein A (973 aa).

34–41 (GLSGSGKS) contacts ATP. ABC transporter domains follow at residues 330–609 (WAKS…PNSI) and 629–958 (AKKN…QFLK). Residue 662-669 (GVSGGGKS) coordinates ATP. A C4-type zinc finger spans residues 761 to 787 (CEACQGDGVIKIEMHFLPDVYVTCDVC).

It belongs to the ABC transporter superfamily. UvrA family. As to quaternary structure, forms a heterotetramer with UvrB during the search for lesions.

It is found in the cytoplasm. Functionally, the UvrABC repair system catalyzes the recognition and processing of DNA lesions. UvrA is an ATPase and a DNA-binding protein. A damage recognition complex composed of 2 UvrA and 2 UvrB subunits scans DNA for abnormalities. When the presence of a lesion has been verified by UvrB, the UvrA molecules dissociate. This Mesorhizobium japonicum (strain LMG 29417 / CECT 9101 / MAFF 303099) (Mesorhizobium loti (strain MAFF 303099)) protein is UvrABC system protein A.